We begin with the raw amino-acid sequence, 204 residues long: Protease (204 aa).

Residues His-53, Asp-70, and Cys-121 contribute to the active site.

It belongs to the peptidase C5 family. In terms of assembly, interacts with protease cofactor pVI-C; this interaction is necessary for protease activation.

The protein localises to the virion. It is found in the host nucleus. It catalyses the reaction Cleaves proteins of the adenovirus and its host cell at two consensus sites: -Yaa-Xaa-Gly-Gly-|-Xaa- and -Yaa-Xaa-Gly-Xaa-|-Gly- (in which Yaa is Met, Ile or Leu, and Xaa is any amino acid).. Its activity is regulated as follows. Requires DNA and protease cofactor for maximal activation. Inside nascent virions, becomes partially activated by binding to the viral DNA, allowing it to cleave the cofactor that binds to the protease and fully activates it. Actin, like the viral protease cofactor, seems to act as a cofactor in the cleavage of cytokeratin 18 and of actin itself. Cleaves viral precursor proteins (pTP, pIIIa, pVI, pVII, pVIII, and pX) inside newly assembled particles giving rise to mature virions. Protease complexed to its cofactor slides along the viral DNA to specifically locate and cleave the viral precursors. Mature virions have a weakened organization compared to the unmature virions, thereby facilitating subsequent uncoating. Without maturation, the particle lacks infectivity and is unable to uncoat. Late in adenovirus infection, in the cytoplasm, may participate in the cytoskeleton destruction. Cleaves host cell cytoskeletal keratins K7 and K18. The protein is Protease of Porcine adenovirus A serotype 3 (PAdV-3).